The following is a 396-amino-acid chain: S-adenosylmethionine synthase (396 aa).

Residue His-16 participates in ATP binding. Mg(2+) is bound at residue Asp-18. Glu-44 contacts K(+). Positions 57 and 100 each coordinate L-methionine. The interval 100–110 is flexible loop; the sequence is QSVDINQGVDR. Residues 165–167, Asp-240, 246–247, Ala-263, and Lys-267 contribute to the ATP site; these read DAK and RK. Position 240 (Asp-240) interacts with L-methionine. Lys-271 contacts L-methionine.

The protein belongs to the AdoMet synthase family. Homotetramer; dimer of dimers. Requires Mg(2+) as cofactor. The cofactor is K(+).

The protein resides in the cytoplasm. The catalysed reaction is L-methionine + ATP + H2O = S-adenosyl-L-methionine + phosphate + diphosphate. Its pathway is amino-acid biosynthesis; S-adenosyl-L-methionine biosynthesis; S-adenosyl-L-methionine from L-methionine: step 1/1. In terms of biological role, catalyzes the formation of S-adenosylmethionine (AdoMet) from methionine and ATP. The overall synthetic reaction is composed of two sequential steps, AdoMet formation and the subsequent tripolyphosphate hydrolysis which occurs prior to release of AdoMet from the enzyme. In Pseudomonas aeruginosa (strain UCBPP-PA14), this protein is S-adenosylmethionine synthase.